Consider the following 513-residue polypeptide: GMP synthase [glutamine-hydrolyzing] (513 aa).

A Glutamine amidotransferase type-1 domain is found at 9–198 (LILVLDFGSQ…VRRVCNCTGE (190 aa)). The active-site Nucleophile is C86. Active-site residues include H172 and E174. The GMPS ATP-PPase domain maps to 199–388 (WTMENFIEIE…LGIPEHLVWR (190 aa)). 226–232 (SGGVDSS) contacts ATP.

As to quaternary structure, homodimer.

It catalyses the reaction XMP + L-glutamine + ATP + H2O = GMP + L-glutamate + AMP + diphosphate + 2 H(+). It functions in the pathway purine metabolism; GMP biosynthesis; GMP from XMP (L-Gln route): step 1/1. Its function is as follows. Catalyzes the synthesis of GMP from XMP. In Staphylococcus epidermidis (strain ATCC 12228 / FDA PCI 1200), this protein is GMP synthase [glutamine-hydrolyzing].